The following is a 210-amino-acid chain: Transposable element activator uncharacterized 23 kDa protein (210 aa).

The segment covering 67-78 (SGRMGGPRRDGR) has biased composition (basic and acidic residues). The tract at residues 67-87 (SGRMGGPRRDGRVASSGVEGG) is disordered.

This is Transposable element activator uncharacterized 23 kDa protein from Zea mays (Maize).